Consider the following 232-residue polypeptide: Cysteine proteinase inhibitor 7 (232 aa).

Residues 1 to 29 form the signal peptide; that stretch reads MDMRRASMCMMLICVSLVLLSGFGQFVIC. Cystatin domains are found at residues 46 to 135 and 152 to 214; these read GGFS…KNII and FDWR…ERGN. The Secondary area of contact signature appears at 91–95; the sequence is QVVAG. Position 181 is a phosphoserine (S181).

It belongs to the cystatin family. Phytocystatin subfamily.

It is found in the secreted. Functionally, specific inhibitor of cysteine proteinases. Probably involved in the regulation of endogenous processes and in defense against pests and pathogens. The protein is Cysteine proteinase inhibitor 7 (CYS7) of Arabidopsis thaliana (Mouse-ear cress).